A 340-amino-acid chain; its full sequence is Glyceraldehyde-3-phosphate dehydrogenase (340 aa).

Residues 13–14 and glycine 112 each bind NAD(+); that span reads TI. Position 141-143 (141-143) interacts with D-glyceraldehyde 3-phosphate; it reads SCN. Cysteine 142 serves as the catalytic Nucleophile. Position 170 (arginine 170) interacts with NAD(+). D-glyceraldehyde 3-phosphate is bound at residue 196–197; that stretch reads HG. Glutamine 302 contributes to the NAD(+) binding site.

It belongs to the glyceraldehyde-3-phosphate dehydrogenase family. In terms of assembly, homotetramer.

The protein resides in the cytoplasm. It carries out the reaction D-glyceraldehyde 3-phosphate + phosphate + NADP(+) = (2R)-3-phospho-glyceroyl phosphate + NADPH + H(+). The catalysed reaction is D-glyceraldehyde 3-phosphate + phosphate + NAD(+) = (2R)-3-phospho-glyceroyl phosphate + NADH + H(+). It participates in carbohydrate degradation; glycolysis; pyruvate from D-glyceraldehyde 3-phosphate: step 1/5. The polypeptide is Glyceraldehyde-3-phosphate dehydrogenase (gap) (Archaeoglobus fulgidus (strain ATCC 49558 / DSM 4304 / JCM 9628 / NBRC 100126 / VC-16)).